The chain runs to 803 residues: Putative metal ion transporter C27B12.12c (803 aa).

A compositionally biased stretch (polar residues) spans 1–20 (MSFQQPSNGAQGGNNNALEK). A disordered region spans residues 1 to 255 (MSFQQPSNGA…SSDVSGSDEN (255 aa)). Positions 21–45 (TSSNEATSSSSTQVSSLSASGISVS) are enriched in low complexity. Polar residues predominate over residues 58-82 (MQVQSSQHLEANVQSPVSSQTTYAT). 2 stretches are compositionally biased toward basic residues: residues 105-123 (KPKK…RKKI) and 152-166 (QSNK…KHSP). 2 stretches are compositionally biased toward low complexity: residues 181 to 194 (ALSA…QHAS) and 218 to 253 (SSSS…SGSD). Ser318 carries the phosphoserine modification. 2 disordered regions span residues 326-349 (PRLK…QVDE) and 406-431 (FEPH…NNAE). Over residues 337 to 347 (DNEDREVDSQV) the composition is skewed to acidic residues. Over residues 406-419 (FEPHWNDLSPHDPN) the composition is skewed to basic and acidic residues. A compositionally biased stretch (polar residues) spans 420–430 (DPSSSLHSNNA). 2 positions are modified to phosphoserine: Ser449 and Ser452. Helical transmembrane passes span 745–765 (ITLI…FGMN) and 776–796 (LAWF…GWII).

Belongs to the CorA metal ion transporter (MIT) (TC 1.A.35) family.

It is found in the cytoplasm. Its subcellular location is the membrane. The chain is Putative metal ion transporter C27B12.12c from Schizosaccharomyces pombe (strain 972 / ATCC 24843) (Fission yeast).